Reading from the N-terminus, the 60-residue chain is uncharacterized protein (60 aa).

This is an uncharacterized protein from Emericella nidulans (strain FGSC A4 / ATCC 38163 / CBS 112.46 / NRRL 194 / M139) (Aspergillus nidulans).